The primary structure comprises 462 residues: NEDD8-activating enzyme E1 catalytic subunit (462 aa).

Ala-2 carries the N-acetylalanine modification. The segment at 53–70 (HPDFEPSTESLQFLLDTC) is interaction with UBE2M N-terminus. ATP-binding positions include 100–124 (DMDT…GRPK) and 148–171 (IQDF…SIIA). Interaction with UBE2M N-terminus regions lie at residues 157–161 (RQFHI) and 192–217 (PSSI…LPGM). The tract at residues 227–229 (LYP) is interaction with NEDD8. Cys-237 serves as the catalytic Glycyl thioester intermediate. Interaction with NAE1 stretches follow at residues 242–248 (MPRLPEH) and 292–295 (YNIR). The tract at residues 331–338 (IATSAYIP) is interaction with UBE2M N-terminus. The segment at 352–357 (YTYTFE) is interaction with NEDD8. An interaction with UBE2M core domain region spans residues 368–462 (SQLPQNIQFS…QTVLFKLHFT (95 aa)).

It belongs to the ubiquitin-activating E1 family. UBA3 subfamily. Heterodimer of UBA3 and NAE1. Interacts with NEDD8, UBE2F and UBE2M. Binds ESR1 and ESR2 with bound steroid ligand. Interacts with TBATA. In terms of tissue distribution, ubiquitously expressed.

It catalyses the reaction ATP + [NEDD8 protein] + [E1 NEDD8-activating enzyme]-L-cysteine = AMP + diphosphate + [E1 NEDD8-activating enzyme]-S-[NEDD8 protein]-yl-L-cysteine.. It functions in the pathway protein modification; protein neddylation. Binding of TP53BP2 to the regulatory subunit NAE1 decreases activity. In terms of biological role, catalytic subunit of the dimeric UBA3-NAE1 E1 enzyme. E1 activates NEDD8 by first adenylating its C-terminal glycine residue with ATP, thereafter linking this residue to the side chain of the catalytic cysteine, yielding a NEDD8-UBA3 thioester and free AMP. E1 finally transfers NEDD8 to the catalytic cysteine of UBE2M. Down-regulates steroid receptor activity. Necessary for cell cycle progression. The polypeptide is NEDD8-activating enzyme E1 catalytic subunit (Uba3) (Rattus norvegicus (Rat)).